Here is a 3462-residue protein sequence, read N- to C-terminus: DNA-directed RNA polymerase subunit beta'' (3462 aa).

The Zn(2+) site is built by cysteine 263, cysteine 335, cysteine 342, and cysteine 345. The insert-1 stretch occupies residues 541-1085 (KIDDQELSSV…PNKIFSSNLF (545 aa)). Residues 1528-1585 (PQSANERKQILKKARQKLRLFPLNLNEKKNRFSSVTLDLLRDQTTLHKMQSCGEAESG) are insert-2. The insert-3 stretch occupies residues 1602–1699 (KKITEIFTFC…FSKQMGNRLL (98 aa)). Positions 1938 to 2168 (LKNKMNQSFS…SQASWILETN (231 aa)) are insert-4. An insert-5 region spans residues 2320–2870 (NLVSGKLNFL…KKKIAKEGAF (551 aa)). Residues 2972-3196 (SKSQRGWFHN…IGQLLRYGKE (225 aa)) are insert-6.

Belongs to the RNA polymerase beta' chain family. RpoC2 subfamily. As to quaternary structure, in plastids the minimal PEP RNA polymerase catalytic core is composed of four subunits: alpha, beta, beta', and beta''. When a (nuclear-encoded) sigma factor is associated with the core the holoenzyme is formed, which can initiate transcription. The cofactor is Zn(2+).

Its subcellular location is the plastid. The protein resides in the chloroplast. It carries out the reaction RNA(n) + a ribonucleoside 5'-triphosphate = RNA(n+1) + diphosphate. Functionally, DNA-dependent RNA polymerase catalyzes the transcription of DNA into RNA using the four ribonucleoside triphosphates as substrates. The chain is DNA-directed RNA polymerase subunit beta'' from Tupiella akineta (Green alga).